The following is a 467-amino-acid chain: MTMLLDGGPQFPGLGVGSFGAPRHHEMPNREPAGMGLNPFGDSTHAAAAAAAAAAFKLSPAAAHDLSSGQSSAFTPQGSGYANALGHHHHHHHHHHHTSQVPSYGGAASAAFNSTREFLFRQRSSGLSEAASGGGQHGLFAGSASSLHAPAGIPEPPSYLLFPGLHEQGAGHPSPTGHVDNNQVHLGLRGELFGRADPYRPVASPRTDPYAAGAQFPNYSPMNMNMGVNVAAHHGPGAFFRYMRQPIKQELSCKWIDEAQLSRPKKSCDRTFSTMHELVTHVTMEHVGGPEQNNHVCYWEECPREGKSFKAKYKLVNHIRVHTGEKPFPCPFPGCGKIFARSENLKIHKRTHTGEKPFKCEFEGCDRRFANSSDRKKHMHVHTSDKPYICKVCDKSYTHPSSLRKHMKVHESQGSDSSPAASSGYESSTPPAIASANSKDTTKTPSAVQTSTSHNPGLPPNFNEWYV.

Residues 66 to 107 (LSSGQSSAFTPQGSGYANALGHHHHHHHHHHHTSQVPSYGGA) are disordered. The span at 67-80 (SSGQSSAFTPQGSG) shows a compositional bias: polar residues. Positions 86 to 98 (GHHHHHHHHHHHT) are enriched in basic residues. Lysine 248 is covalently cross-linked (Glycyl lysine isopeptide (Lys-Gly) (interchain with G-Cter in SUMO2)). The segment at 251 to 286 (LSCKWIDEAQLSRPKKSCDRTFSTMHELVTHVTMEH) adopts a C2H2-type 1; atypical zinc-finger fold. Residues 295 to 322 (HVCYWEECPREGKSFKAKYKLVNHIRVH) form a C2H2-type 2; atypical zinc finger. Short sequence motifs (nuclear localization signal) lie at residues 297-322 (CYWE…IRVH) and 330-352 (CPFP…KRTH). 3 consecutive C2H2-type zinc fingers follow at residues 328–352 (FPCP…KRTH), 358–382 (FKCE…MHVH), and 388–410 (YICK…MKVH). Residues 404–467 (RKHMKVHESQ…LPPNFNEWYV (64 aa)) are disordered. A compositionally biased stretch (low complexity) spans 412-428 (SQGSDSSPAASSGYESS). The span at 435–455 (SANSKDTTKTPSAVQTSTSHN) shows a compositional bias: polar residues.

This sequence belongs to the GLI C2H2-type zinc-finger protein family. As to quaternary structure, interacts (via the C2H2-type domains 3, 4 and 5) with MDFIC (via the C2H2-type domains 3, 4 and 5); the interaction reduces its transcriptional activity. Interacts with KPNA1 and KPNA6. Interacts (via C2H2-type domains 3, 4 and 5) with GLI3; the interaction enhances its transcriptional activity.

The protein resides in the nucleus. It is found in the cytoplasm. Its function is as follows. Acts as a transcriptional activator. Required in the earliest stages in both axial midline development and left-right (LR) asymmetry specification. Binds to the minimal GLI-consensus sequence 5'-GGGTGGTC-3'. The polypeptide is Zinc finger protein ZIC 3 (ZIC3) (Homo sapiens (Human)).